Reading from the N-terminus, the 781-residue chain is ATP-dependent RNA helicase rok1 (781 aa).

2 disordered regions span residues 7 to 108 (LSRG…KPKL) and 134 to 177 (QDEA…IYPQ). Over residues 48–57 (KRGKKRKRKG) the composition is skewed to basic residues. The segment covering 66 to 75 (SGDEDDDASD) has biased composition (acidic residues). 2 stretches are compositionally biased toward basic and acidic residues: residues 84–108 (TPEE…KPKL) and 139–173 (TEEK…DKKQ). The Q motif signature appears at 184 to 212 (ELKYTYGIHPVLADNITRQGFRVPTEVQM). In terms of domain architecture, Helicase ATP-binding spans 233-487 (DVKVEKGIDF…TKHIDKRAKR (255 aa)). ATP is bound at residue 246–253 (APTGSGKT). The interval 323-386 (ESNEQEETEQ…SRAKGDQKFK (64 aa)) is disordered. Positions 339-369 (QDSDSDSEAESEPEEVMKIDEEEEEEEESDS) are enriched in acidic residues. Positions 370–386 (DAEKKTESRAKGDQKFK) are enriched in basic and acidic residues. The short motif at 434 to 437 (DEAD) is the DEAD box element. The region spanning 527–689 (ALRQLLHPVS…GKDIDEKDTV (163 aa)) is the Helicase C-terminal domain. The tract at residues 718-781 (RGVESRRTGG…KAEEEWTGLD (64 aa)) is disordered. The segment covering 736–752 (SWERRRENNRREAIEAS) has biased composition (basic and acidic residues).

Belongs to the DEAD box helicase family. DDX52/ROK1 subfamily. Interacts with the U3 snoRNA and is associated with the 90S and 40S pre-ribosomes.

Its subcellular location is the nucleus. The protein resides in the nucleolus. The enzyme catalyses ATP + H2O = ADP + phosphate + H(+). In terms of biological role, ATP-dependent RNA helicase involved in 40S ribosomal subunit biogenesis. Required for the processing and cleavage of 35S pre-rRNA at sites A0, A1, and A2, leading to mature 18S rRNA. The protein is ATP-dependent RNA helicase rok1 (drh-16) of Neurospora crassa (strain ATCC 24698 / 74-OR23-1A / CBS 708.71 / DSM 1257 / FGSC 987).